The primary structure comprises 382 residues: Na(+)/H(+) antiporter NhaA 2 (382 aa).

12 helical membrane-spanning segments follow: residues 7 to 27 (AGGV…NSYL), 28 to 48 (SGFY…AFEI), 52 to 72 (LLLW…GLEV), 88 to 108 (VLPG…YASF), 118 to 138 (GWAI…SLFG), 147 to 167 (LFLL…IALF), 170 to 190 (HELS…LFVL), 206 to 226 (LVVW…GFVI), 254 to 274 (VAYF…LGGI), 285 to 305 (LGII…VCWL), 325 to 345 (GVCL…SLAF), and 356 to 376 (VKLG…LILT).

The protein belongs to the NhaA Na(+)/H(+) (TC 2.A.33) antiporter family.

Its subcellular location is the cell inner membrane. The enzyme catalyses Na(+)(in) + 2 H(+)(out) = Na(+)(out) + 2 H(+)(in). In terms of biological role, na(+)/H(+) antiporter that extrudes sodium in exchange for external protons. This Saccharophagus degradans (strain 2-40 / ATCC 43961 / DSM 17024) protein is Na(+)/H(+) antiporter NhaA 2.